A 61-amino-acid chain; its full sequence is Large ribosomal subunit protein uL30 (61 aa).

This sequence belongs to the universal ribosomal protein uL30 family. In terms of assembly, part of the 50S ribosomal subunit.

This chain is Large ribosomal subunit protein uL30, found in Corynebacterium urealyticum (strain ATCC 43042 / DSM 7109).